Consider the following 105-residue polypeptide: uncharacterized protein (105 aa).

This is an uncharacterized protein from Microplitis demolitor (Parasitoid wasp).